Here is a 304-residue protein sequence, read N- to C-terminus: Ribonuclease Z (304 aa).

H63, H65, D67, H68, H143, D213, and H271 together coordinate Zn(2+). Catalysis depends on D67, which acts as the Proton acceptor.

The protein belongs to the RNase Z family. As to quaternary structure, homodimer. Requires Zn(2+) as cofactor.

It carries out the reaction Endonucleolytic cleavage of RNA, removing extra 3' nucleotides from tRNA precursor, generating 3' termini of tRNAs. A 3'-hydroxy group is left at the tRNA terminus and a 5'-phosphoryl group is left at the trailer molecule.. Its function is as follows. Zinc phosphodiesterase, which displays some tRNA 3'-processing endonuclease activity. Probably involved in tRNA maturation, by removing a 3'-trailer from precursor tRNA. The protein is Ribonuclease Z of Bacteroides fragilis (strain YCH46).